Here is a 341-residue protein sequence, read N- to C-terminus: Basic membrane protein B (341 aa).

Positions 1 to 14 are cleaved as a signal peptide; it reads MRIVIFILGILLTS. The N-palmitoyl cysteine moiety is linked to residue C15. A lipid anchor (S-diacylglycerol cysteine) is attached at C15.

It belongs to the BMP lipoprotein family. In terms of assembly, monomer.

The protein localises to the cell inner membrane. Functionally, may be part of an ABC-type nucleoside uptake system involved in the purine salvage pathway. The sequence is that of Basic membrane protein B (bmpB) from Borrelia garinii subsp. bavariensis (strain ATCC BAA-2496 / DSM 23469 / PBi) (Borreliella bavariensis).